The sequence spans 1733 residues: Desertorin synthase (1733 aa).

Residues 21–358 (RIRQQSRSSR…HAPTRDLTEW (338 aa)) form an N-terminal acylcarrier protein transacylase domain (SAT) region. A Ketosynthase family 3 (KS3) domain is found at 372–799 (DCRIAVVGMS…GGNTALLLEE (428 aa)). A compositionally biased stretch (basic and acidic residues) spans 406–422 (HVPPDRYDVQSHTDPTG). The interval 406–429 (HVPPDRYDVQSHTDPTGRRMNTSQ) is disordered. Residues C544, H679, and H718 each act as for beta-ketoacyl synthase activity in the active site. The segment at 903–1211 (FVFSGQGSFY…DNWHTLAGSM (309 aa)) is malonyl-CoA:ACP transacylase (MAT) domain. The tract at residues 1288–1420 (HRIVEETFWA…GTVSVGNAAS (133 aa)) is N-terminal hotdog fold. One can recognise a PKS/mFAS DH domain in the interval 1288–1598 (HRIVEETFWA…LRPLPRILMH (311 aa)). The segment at 1299-1594 (GGRVVMESNV…AGVTLRPLPR (296 aa)) is product template (PT) domain. Catalysis depends on H1320, which acts as the Proton acceptor; for dehydratase activity. The interval 1448–1598 (ADRLTRDTVY…LRPLPRILMH (151 aa)) is C-terminal hotdog fold. The active-site Proton donor; for dehydratase activity is D1506. Residues 1608-1659 (HNWGNSPAKPEAKPEMVPTSGSSSAAGSPSGSSAGPLSIPERLADPSETSFQ) are disordered. The segment covering 1627–1643 (SGSSSAAGSPSGSSAGP) has biased composition (low complexity). The Carrier domain occupies 1659-1733 (QSKASKVSKA…TVGEVKRQML (75 aa)). S1696 bears the O-(pantetheine 4'-phosphoryl)serine mark.

Pantetheine 4'-phosphate is required as a cofactor.

It functions in the pathway secondary metabolite biosynthesis. Its function is as follows. Non-reducing polyketide synthase; part of the gene cluster that mediates the biosynthesis of the bicoumarin desertorin. The non-reducing polyketide synthase desS first catalyzes the formation of the pentaketidic 4,7-dihydroxy-5-methylcoumarin from acetyl coenzyme A and 4 malonyl coenzyme A molecules. Further O-methylation by desB leads to the formation of 7-demethylsiderin. Then, an oxidative phenol coupling catalyzed by the cytochrome P450 monooxygenase desC forms the 6,8'-dimer M-desertorin A via dimerization the monomeric precursor, 7-demethylsiderin. M-desertorin A is further converted to M-desertorin C. In Aspergillus desertorum (Emericella desertorum), this protein is Desertorin synthase.